The primary structure comprises 974 residues: UvrABC system protein A (974 aa).

Residue 34-41 (GLSGSGKS) participates in ATP binding. ABC transporter domains lie at 331 to 610 (WARS…TNSL) and 630 to 959 (ISKT…QFLK). ATP is bound at residue 663–670 (GVSGGGKS). The segment at 762–788 (CEACQGDGVIKIEMHFLPDVYVTCDVC) adopts a C4-type zinc-finger fold.

This sequence belongs to the ABC transporter superfamily. UvrA family. As to quaternary structure, forms a heterotetramer with UvrB during the search for lesions.

The protein resides in the cytoplasm. In terms of biological role, the UvrABC repair system catalyzes the recognition and processing of DNA lesions. UvrA is an ATPase and a DNA-binding protein. A damage recognition complex composed of 2 UvrA and 2 UvrB subunits scans DNA for abnormalities. When the presence of a lesion has been verified by UvrB, the UvrA molecules dissociate. The chain is UvrABC system protein A from Brucella melitensis biotype 1 (strain ATCC 23456 / CCUG 17765 / NCTC 10094 / 16M).